The sequence spans 619 residues: MLLSWLTGLGAGLLSLHFLQKLLFPYFWDDFWYLLKVVRYGIQMEMYKLRGELVTVLDKFLSHTRKQPRKAFIIYEGDVYTYEDVDKRSNRIAHALLNHSSLKRGDVVALLMSNEPDFVHVWFGLAKLGCVVAFLNSNLRFDSLLHCINTCEPTAVVVGGDLLGSIEEILPSLPKHVRVWGMKDSVPEGIDSLQEKLSLASDEPVPPSHHVTSSLKSTCLYIFTSGTTGLPKAAVISQLQVLKGSVGLWAFGCTADDIIYITLPLYHSSGSLLGIGGCVELGATCVLKKKFSASQFWNDCKKYNVTVFQYIGELCRYLCKQPQREGEKDHRVRLAVGNGLSSDVWRQFLDRFGNIKMCELYGATEGNIVFMNHTGKIGSVGRANFFYSLFFSFELIKYDFQKDEPWRNGQGWCSCVRKGEPGLLISRVNKKNPFFGYAGSDTHTKSKLLFDVFRKGDVYFNTGDLMFQDQENFVYFWDRLGDTFRWKGENVATTEVADVLGRLDFIQEANVYGVRVPGYEGKAGMTSVILKPNKSLDLEKMYNQVVTSLPAYACPLFLRIQDKMETTGTFKLKKLQLVEEGFDPLKISDPLYFMDNLKKSYVPLTEEIYNQIMSEEVKL.

The next 2 helical transmembrane spans lie at 22 to 42 (LLFPYFWDDFWYLLKVVRYGI) and 119 to 139 (VHVWFGLAKLGCVVAFLNSNL). An AMP-binding site is contributed by 221 to 232 (YIFTSGTTGLPK).

Belongs to the ATP-dependent AMP-binding enzyme family.

Its subcellular location is the cell membrane. It localises to the sarcolemma. It catalyses the reaction a fatty acid(in) = a fatty acid(out). The enzyme catalyses hexadecanoate(out) = hexadecanoate(in). The catalysed reaction is (9Z,12Z)-octadecadienoate(out) = (9Z,12Z)-octadecadienoate(in). It carries out the reaction (9Z)-octadecenoate(out) = (9Z)-octadecenoate(in). It catalyses the reaction a very long-chain fatty acid + ATP + CoA = a very long-chain fatty acyl-CoA + AMP + diphosphate. The enzyme catalyses tetracosanoate + ATP + CoA = tetracosanoyl-CoA + AMP + diphosphate. The catalysed reaction is a long-chain fatty acid + ATP + CoA = a long-chain fatty acyl-CoA + AMP + diphosphate. It carries out the reaction (9Z)-octadecenoate + ATP + CoA = (9Z)-octadecenoyl-CoA + AMP + diphosphate. It catalyses the reaction (5Z,8Z,11Z,14Z)-eicosatetraenoate + ATP + CoA = (5Z,8Z,11Z,14Z)-eicosatetraenoyl-CoA + AMP + diphosphate. Its function is as follows. Mediates the import of long-chain fatty acids (LCFA) into the cell by facilitating their transport at the plasma membrane. Also functions as an acyl-CoA ligase catalyzing the ATP-dependent formation of fatty acyl-CoA using LCFA and very-long-chain fatty acids (VLCFA) as substrates. Plays a pivotal role in regulating available LCFA substrates from exogenous sources in tissues undergoing high levels of beta-oxidation such as the heart. The polypeptide is Long-chain fatty acid transport protein 6 (Slc27a6) (Mus musculus (Mouse)).